The following is a 632-amino-acid chain: tRNA uridine 5-carboxymethylaminomethyl modification enzyme MnmG (632 aa).

FAD contacts are provided by residues 13 to 18 (GGGHAG), Val-125, and Ser-180. 273–287 (GPRYCPSIEDKVMRF) serves as a coordination point for NAD(+). Gln-370 is an FAD binding site.

This sequence belongs to the MnmG family. Homodimer. Heterotetramer of two MnmE and two MnmG subunits. FAD is required as a cofactor.

Its subcellular location is the cytoplasm. In terms of biological role, NAD-binding protein involved in the addition of a carboxymethylaminomethyl (cmnm) group at the wobble position (U34) of certain tRNAs, forming tRNA-cmnm(5)s(2)U34. The protein is tRNA uridine 5-carboxymethylaminomethyl modification enzyme MnmG of Proteus mirabilis (strain HI4320).